The sequence spans 175 residues: Nucleoside triphosphate/diphosphate phosphatase (175 aa).

The Proton donor role is filled by Arg23. Residues Asn87, Asp103, Asp105, Asp107, Asp120, and Glu123 each coordinate Mg(2+).

Belongs to the Ntdp family. Mg(2+) is required as a cofactor.

The enzyme catalyses a ribonucleoside 5'-triphosphate + H2O = a ribonucleoside 5'-diphosphate + phosphate + H(+). The catalysed reaction is a ribonucleoside 5'-diphosphate + H2O = a ribonucleoside 5'-phosphate + phosphate + H(+). Functionally, has nucleoside phosphatase activity towards nucleoside triphosphates and nucleoside diphosphates. In Oceanobacillus iheyensis (strain DSM 14371 / CIP 107618 / JCM 11309 / KCTC 3954 / HTE831), this protein is Nucleoside triphosphate/diphosphate phosphatase.